The sequence spans 263 residues: 3-methyl-2-oxobutanoate hydroxymethyltransferase (263 aa).

The Mg(2+) site is built by Asp-44 and Asp-83. 3-methyl-2-oxobutanoate contacts are provided by residues 44–45 (DS), Asp-83, and Lys-113. Residue Glu-115 participates in Mg(2+) binding. The Proton acceptor role is filled by Glu-183.

This sequence belongs to the PanB family. In terms of assembly, homodecamer; pentamer of dimers. The cofactor is Mg(2+).

It localises to the cytoplasm. It carries out the reaction 3-methyl-2-oxobutanoate + (6R)-5,10-methylene-5,6,7,8-tetrahydrofolate + H2O = 2-dehydropantoate + (6S)-5,6,7,8-tetrahydrofolate. It functions in the pathway cofactor biosynthesis; (R)-pantothenate biosynthesis; (R)-pantoate from 3-methyl-2-oxobutanoate: step 1/2. Catalyzes the reversible reaction in which hydroxymethyl group from 5,10-methylenetetrahydrofolate is transferred onto alpha-ketoisovalerate to form ketopantoate. The chain is 3-methyl-2-oxobutanoate hydroxymethyltransferase from Trichodesmium erythraeum (strain IMS101).